A 339-amino-acid chain; its full sequence is Deoxyhypusine hydroxylase (339 aa).

HEAT-like PBS-type repeat units lie at residues 71-97 and 104-130; these read LKHE…VVKN and CRHE…LRDD. Fe cation is bound by residues His-73, Glu-74, His-106, and Glu-107. A disordered region spans residues 159–183; that stretch reads EKLKPSDFTSIDPAPPLPMASSQPS. 3 HEAT-like PBS-type repeats span residues 200–233, 238–264, and 271–298; these read QRYR…GLKD, FRHE…TLSD, and VRHE…FLND. 4 residues coordinate Fe cation: His-240, Glu-241, His-273, and Glu-274.

This sequence belongs to the deoxyhypusine hydroxylase family. It depends on Fe(2+) as a cofactor.

Its subcellular location is the cytoplasm. The protein localises to the nucleus. The enzyme catalyses [eIF5A protein]-deoxyhypusine + AH2 + O2 = [eIF5A protein]-hypusine + A + H2O. It functions in the pathway protein modification; eIF5A hypusination. Its function is as follows. Catalyzes the hydroxylation of the N(6)-(4-aminobutyl)-L-lysine intermediate to form hypusine, an essential post-translational modification only found in mature eIF-5A factor. In Aspergillus oryzae (strain ATCC 42149 / RIB 40) (Yellow koji mold), this protein is Deoxyhypusine hydroxylase (lia1).